The chain runs to 93 residues: Putative pterin-4-alpha-carbinolamine dehydratase (93 aa).

It belongs to the pterin-4-alpha-carbinolamine dehydratase family.

The enzyme catalyses (4aS,6R)-4a-hydroxy-L-erythro-5,6,7,8-tetrahydrobiopterin = (6R)-L-erythro-6,7-dihydrobiopterin + H2O. The chain is Putative pterin-4-alpha-carbinolamine dehydratase from Sulfurisphaera tokodaii (strain DSM 16993 / JCM 10545 / NBRC 100140 / 7) (Sulfolobus tokodaii).